Here is a 219-residue protein sequence, read N- to C-terminus: Cytidylate kinase (219 aa).

Residue 15-23 (GPAASGKGT) coordinates ATP.

This sequence belongs to the cytidylate kinase family. Type 1 subfamily.

Its subcellular location is the cytoplasm. The enzyme catalyses CMP + ATP = CDP + ADP. It carries out the reaction dCMP + ATP = dCDP + ADP. The protein is Cytidylate kinase of Brucella abortus (strain S19).